Reading from the N-terminus, the 498-residue chain is 3-octaprenyl-4-hydroxybenzoate carboxy-lyase (498 aa).

Asparagine 176 is a Mn(2+) binding site. Residues 179–181 (IYR), 193–195 (RWL), and 198–199 (RG) each bind prenylated FMN. Glutamate 242 serves as a coordination point for Mn(2+). Aspartate 291 acts as the Proton donor in catalysis.

This sequence belongs to the UbiD family. Homohexamer. The cofactor is prenylated FMN. Mn(2+) is required as a cofactor.

It localises to the cell membrane. It carries out the reaction a 4-hydroxy-3-(all-trans-polyprenyl)benzoate + H(+) = a 2-(all-trans-polyprenyl)phenol + CO2. The protein operates within cofactor biosynthesis; ubiquinone biosynthesis. Catalyzes the decarboxylation of 3-octaprenyl-4-hydroxy benzoate to 2-octaprenylphenol, an intermediate step in ubiquinone biosynthesis. This is 3-octaprenyl-4-hydroxybenzoate carboxy-lyase from Escherichia coli O6:K15:H31 (strain 536 / UPEC).